A 205-amino-acid chain; its full sequence is IQ domain-containing protein F1 (205 aa).

Composition is skewed to basic and acidic residues over residues 1-24 (MEEKQPQKTKEPSKEDEPQQKEMP) and 51-68 (ANEKSEKPPENQKKLSDK). The interval 1–68 (MEEKQPQKTK…PENQKKLSDK (68 aa)) is disordered. IQ domains lie at 68-97 (KDTVATKIQAWWRGTLVRRALLHAALSACI) and 124-153 (KEWAAVTLQSQARMWRIRRRYCQVLNAVRI).

Interacts with calmodulin.

It is found in the cytoplasmic vesicle. It localises to the secretory vesicle. The protein localises to the acrosome. Functionally, involved in sperm capacitation and acrosome reaction. This chain is IQ domain-containing protein F1, found in Homo sapiens (Human).